The following is a 108-amino-acid chain: U-scoloptoxin(16)-Er10a (108 aa).

Residues 1 to 24 (MASFTSFCVLFTFCLLLLAHQARS) form the signal peptide.

The protein belongs to the scoloptoxin-16 family. Contains 4 disulfide bonds. Expressed by the venom gland.

The protein resides in the secreted. This Ethmostigmus rubripes (Giant centipede) protein is U-scoloptoxin(16)-Er10a.